A 131-amino-acid polypeptide reads, in one-letter code: Small ribosomal subunit protein uS8 (131 aa).

It belongs to the universal ribosomal protein uS8 family. Part of the 30S ribosomal subunit. Contacts proteins S5 and S12.

Its function is as follows. One of the primary rRNA binding proteins, it binds directly to 16S rRNA central domain where it helps coordinate assembly of the platform of the 30S subunit. This chain is Small ribosomal subunit protein uS8, found in Methylococcus capsulatus (strain ATCC 33009 / NCIMB 11132 / Bath).